Here is a 170-residue protein sequence, read N- to C-terminus: Acireductone dioxygenase (170 aa).

Residues histidine 99, histidine 101, glutamate 105, and histidine 144 each coordinate Fe(2+). The Ni(2+) site is built by histidine 99, histidine 101, glutamate 105, and histidine 144.

It belongs to the acireductone dioxygenase (ARD) family. In terms of assembly, monomer. Fe(2+) serves as cofactor. It depends on Ni(2+) as a cofactor.

The catalysed reaction is 1,2-dihydroxy-5-(methylsulfanyl)pent-1-en-3-one + O2 = 3-(methylsulfanyl)propanoate + CO + formate + 2 H(+). It carries out the reaction 1,2-dihydroxy-5-(methylsulfanyl)pent-1-en-3-one + O2 = 4-methylsulfanyl-2-oxobutanoate + formate + 2 H(+). It participates in amino-acid biosynthesis; L-methionine biosynthesis via salvage pathway; L-methionine from S-methyl-5-thio-alpha-D-ribose 1-phosphate: step 5/6. In terms of biological role, catalyzes 2 different reactions between oxygen and the acireductone 1,2-dihydroxy-3-keto-5-methylthiopentene (DHK-MTPene) depending upon the metal bound in the active site. Fe-containing acireductone dioxygenase (Fe-ARD) produces formate and 2-keto-4-methylthiobutyrate (KMTB), the alpha-ketoacid precursor of methionine in the methionine recycle pathway. Ni-containing acireductone dioxygenase (Ni-ARD) produces methylthiopropionate, carbon monoxide and formate, and does not lie on the methionine recycle pathway. The sequence is that of Acireductone dioxygenase from Bacillus mycoides (strain KBAB4) (Bacillus weihenstephanensis).